A 441-amino-acid chain; its full sequence is Tol-Pal system protein TolB (441 aa).

A signal peptide spans 1 to 39 (MPTMTPAFSRASLSEALRSYGLALLLFLATLLAWQPAHA).

Belongs to the TolB family. As to quaternary structure, the Tol-Pal system is composed of five core proteins: the inner membrane proteins TolA, TolQ and TolR, the periplasmic protein TolB and the outer membrane protein Pal. They form a network linking the inner and outer membranes and the peptidoglycan layer.

It is found in the periplasm. In terms of biological role, part of the Tol-Pal system, which plays a role in outer membrane invagination during cell division and is important for maintaining outer membrane integrity. The polypeptide is Tol-Pal system protein TolB (Bordetella avium (strain 197N)).